The chain runs to 341 residues: Uroporphyrinogen decarboxylase (341 aa).

Substrate contacts are provided by residues 26–30 (RQAGR), Asp75, Tyr150, Ser205, and His318.

It belongs to the uroporphyrinogen decarboxylase family. As to quaternary structure, homodimer.

It localises to the cytoplasm. It carries out the reaction uroporphyrinogen III + 4 H(+) = coproporphyrinogen III + 4 CO2. It functions in the pathway porphyrin-containing compound metabolism; protoporphyrin-IX biosynthesis; coproporphyrinogen-III from 5-aminolevulinate: step 4/4. Its function is as follows. Catalyzes the decarboxylation of four acetate groups of uroporphyrinogen-III to yield coproporphyrinogen-III. The polypeptide is Uroporphyrinogen decarboxylase (Thermus thermophilus (strain ATCC BAA-163 / DSM 7039 / HB27)).